A 212-amino-acid chain; its full sequence is Thymidylate kinase (212 aa).

An ATP-binding site is contributed by 11–18 (GPEGAGKT).

This sequence belongs to the thymidylate kinase family.

It carries out the reaction dTMP + ATP = dTDP + ADP. Functionally, phosphorylation of dTMP to form dTDP in both de novo and salvage pathways of dTTP synthesis. In Streptococcus pneumoniae (strain ATCC 700669 / Spain 23F-1), this protein is Thymidylate kinase.